We begin with the raw amino-acid sequence, 314 residues long: Lipoyl synthase (314 aa).

[4Fe-4S] cluster contacts are provided by Cys-61, Cys-66, Cys-72, Cys-87, Cys-91, Cys-94, and Ser-301. The 218-residue stretch at 73–290 (FGRGTATFMI…EEEAKKMGFS (218 aa)) folds into the Radical SAM core domain.

This sequence belongs to the radical SAM superfamily. Lipoyl synthase family. Requires [4Fe-4S] cluster as cofactor.

It is found in the cytoplasm. It carries out the reaction [[Fe-S] cluster scaffold protein carrying a second [4Fe-4S](2+) cluster] + N(6)-octanoyl-L-lysyl-[protein] + 2 oxidized [2Fe-2S]-[ferredoxin] + 2 S-adenosyl-L-methionine + 4 H(+) = [[Fe-S] cluster scaffold protein] + N(6)-[(R)-dihydrolipoyl]-L-lysyl-[protein] + 4 Fe(3+) + 2 hydrogen sulfide + 2 5'-deoxyadenosine + 2 L-methionine + 2 reduced [2Fe-2S]-[ferredoxin]. It functions in the pathway protein modification; protein lipoylation via endogenous pathway; protein N(6)-(lipoyl)lysine from octanoyl-[acyl-carrier-protein]: step 2/2. Catalyzes the radical-mediated insertion of two sulfur atoms into the C-6 and C-8 positions of the octanoyl moiety bound to the lipoyl domains of lipoate-dependent enzymes, thereby converting the octanoylated domains into lipoylated derivatives. The protein is Lipoyl synthase of Dechloromonas aromatica (strain RCB).